The chain runs to 251 residues: Transcription initiation factor TFIID subunit 9B (251 aa).

Met-1 bears the N-acetylmethionine mark. Ser-147 carries the post-translational modification Phosphoserine. 2 positions are modified to phosphothreonine: Thr-159 and Thr-174. A Phosphoserine modification is found at Ser-177. The tract at residues 229 to 251 (QNTANEANPLKRKHEDDDDNDIM) is disordered.

Belongs to the TAF9 family. Binds TAF5 and TAF6. Component of TFIID and the TATA-binding protein-free TAF complex (TFTC). TFIID is composed of TATA binding protein (TBP) and a number of TBP-associated factors (TAFs). Binds N-terminal domain of p53/TP53 which is essential for transcription.

Its subcellular location is the nucleus. Functionally, essential for cell viability. TAF9 and TAF9B are involved in transcriptional activation as well as repression of distinct but overlapping sets of genes. May have a role in gene regulation associated with apoptosis. TAFs are components of the transcription factor IID (TFIID) complex, the TBP-free TAFII complex (TFTC), the PCAF histone acetylase complex and the STAGA transcription coactivator-HAT complex. TFIID or TFTC are essential for the regulation of RNA polymerase II-mediated transcription. This chain is Transcription initiation factor TFIID subunit 9B (TAF9B), found in Homo sapiens (Human).